The primary structure comprises 131 residues: Phosphoribosyl-AMP cyclohydrolase (131 aa).

Asp-78 is a binding site for Mg(2+). Cys-79 is a binding site for Zn(2+). Mg(2+) is bound by residues Asp-80 and Asp-82. Zn(2+) contacts are provided by Cys-96 and Cys-103.

Belongs to the PRA-CH family. As to quaternary structure, homodimer. Mg(2+) is required as a cofactor. Zn(2+) serves as cofactor.

It is found in the cytoplasm. The enzyme catalyses 1-(5-phospho-beta-D-ribosyl)-5'-AMP + H2O = 1-(5-phospho-beta-D-ribosyl)-5-[(5-phospho-beta-D-ribosylamino)methylideneamino]imidazole-4-carboxamide. The protein operates within amino-acid biosynthesis; L-histidine biosynthesis; L-histidine from 5-phospho-alpha-D-ribose 1-diphosphate: step 3/9. Functionally, catalyzes the hydrolysis of the adenine ring of phosphoribosyl-AMP. The sequence is that of Phosphoribosyl-AMP cyclohydrolase from Thioalkalivibrio sulfidiphilus (strain HL-EbGR7).